The chain runs to 529 residues: 1,4-beta-D-glucan cellobiohydrolase xynA (529 aa).

The first 25 residues, 1-25 (MSALNSFNMYKSALILGSLLATAGA), serve as a signal peptide directing secretion. Residues 26 to 456 (QQIGTYTAET…SDIKVGPFNS (431 aa)) are catalytic. N-linked (GlcNAc...) asparagine glycosylation is found at asparagine 70 and asparagine 219. Glutamate 234 serves as the catalytic Nucleophile. Catalysis depends on glutamate 239, which acts as the Proton donor. N-linked (GlcNAc...) asparagine glycosylation occurs at asparagine 413. Residues 413–438 (NETGTPGAARGSCPTTSGNPKTVESQ) are disordered. A compositionally biased stretch (polar residues) spans 425-438 (CPTTSGNPKTVESQ). The N-linked (GlcNAc...) asparagine glycan is linked to asparagine 455. Residues 457–493 (TFSGGTSTGGSTTTTASGTTSTKASTTSTSSTSTGTG) form a thr-rich linker region. Residues 460-491 (GGTSTGGSTTTTASGTTSTKASTTSTSSTSTG) form a disordered region. One can recognise a CBM1 domain in the interval 493–529 (GVAAHWGQCGGQGWTGPTTCASGTTCTVVNPYYSQCL). Intrachain disulfides connect cysteine 501–cysteine 518 and cysteine 512–cysteine 528.

It belongs to the glycosyl hydrolase 7 (cellulase C) family.

It is found in the secreted. It catalyses the reaction Hydrolysis of (1-&gt;4)-beta-D-glucosidic linkages in cellulose and cellotetraose, releasing cellobiose from the non-reducing ends of the chains.. With respect to regulation, cellobiose inhibits xynA at high concentrations. Functionally, the biological conversion of cellulose to glucose generally requires three types of hydrolytic enzymes: (1) Endoglucanases which cut internal beta-1,4-glucosidic bonds; (2) Exocellobiohydrolases that cut the disaccharide cellobiose from the non-reducing end of the cellulose polymer chain; (3) Beta-1,4-glucosidases which hydrolyze the cellobiose and other short cello-oligosaccharides to glucose. The sequence is that of 1,4-beta-D-glucan cellobiohydrolase xynA (xynA) from Talaromyces funiculosus (Fruitlet core rot fungus).